The following is a 333-amino-acid chain: Glycerol-3-phosphate dehydrogenase [NAD(P)+] (333 aa).

Residues serine 13, tryptophan 14, arginine 34, and lysine 108 each contribute to the NADPH site. Residues lysine 108, glycine 137, and serine 139 each contribute to the sn-glycerol 3-phosphate site. Alanine 141 is a binding site for NADPH. The sn-glycerol 3-phosphate site is built by lysine 192, aspartate 245, serine 255, arginine 256, and asparagine 257. Lysine 192 (proton acceptor) is an active-site residue. Arginine 256 lines the NADPH pocket. Glutamate 282 is a binding site for NADPH.

The protein belongs to the NAD-dependent glycerol-3-phosphate dehydrogenase family.

It is found in the cytoplasm. It catalyses the reaction sn-glycerol 3-phosphate + NAD(+) = dihydroxyacetone phosphate + NADH + H(+). The enzyme catalyses sn-glycerol 3-phosphate + NADP(+) = dihydroxyacetone phosphate + NADPH + H(+). The protein operates within membrane lipid metabolism; glycerophospholipid metabolism. Catalyzes the reduction of the glycolytic intermediate dihydroxyacetone phosphate (DHAP) to sn-glycerol 3-phosphate (G3P), the key precursor for phospholipid synthesis. This chain is Glycerol-3-phosphate dehydrogenase [NAD(P)+], found in Thioalkalivibrio sulfidiphilus (strain HL-EbGR7).